The following is a 359-amino-acid chain: Mitochondrial glutathione transporter SLC25A39 (359 aa).

The Mitochondrial intermembrane segment spans residues 1 to 14; that stretch reads MDDQDPGGISPLQQ. 3 Solcar repeats span residues 9 to 151, 159 to 243, and 253 to 347; these read ISPL…LKAF, SDLY…VKSQ, and TSVG…GKSF. The helical transmembrane segment at 15–35 threads the bilayer; sequence MVASGAGAVVTSLFMTPLDVV. At 36–121 the chain is on the mitochondrial matrix side; it reads KVRLQSQRPT…VKIVRHEGTR (86 aa). [2Fe-2S] cluster contacts are provided by Cys-74, Cys-78, Cys-88, and Cys-94. The chain crosses the membrane as a helical span at residues 122 to 142; sequence TLWSGLPATLVMTVPATAIYF. The Mitochondrial intermembrane portion of the chain corresponds to 143-164; that stretch reads TAYDQLKAFLCGQSLTSDLYAP. Residues 165-185 form a helical membrane-spanning segment; it reads MVAGALARMGTVTVVSPLELV. Over 186–214 the chain is Mitochondrial matrix; that stretch reads RTKLQAQHVSYRELAACVQAAVAQGGWRS. Residues 215 to 235 form a helical membrane-spanning segment; sequence LWLGWGPTALRDVPFSALYWF. Topologically, residues 236-255 are mitochondrial intermembrane; sequence NYELVKSQLNGPRQKEQTSV. A helical transmembrane segment spans residues 256–276; it reads GISFVAGGISGMVAATLTLPF. Topologically, residues 277–317 are mitochondrial matrix; sequence DVVKTQRQMSLGAVEAMRVKPPRVDSTWLLLRRIQAESGTR. Residues 318–338 form a helical membrane-spanning segment; it reads GLFAGFLPRIIKAAPSCAIMI. Topologically, residues 339 to 359 are mitochondrial intermembrane; that stretch reads STYEFGKSFFHRLNQEQPLGH.

This sequence belongs to the mitochondrial carrier (TC 2.A.29) family. In terms of processing, cleaved and degraded by AFG3L2; degradation by AFG3L2 is regulated by the ability of SLC25A39 to bind iron-sulfur. In absence of mitochondrial glutathione, SLC25A39 binds iron-sulfur, preventing cleavage and degradation by AFG3L2. The presence of mitochondrial glutathione prevents iron-sulfur-binding to SLC25A39, promoting cleavage and degradation by AFG3L2.

The protein resides in the mitochondrion inner membrane. It catalyses the reaction glutathione(in) = glutathione(out). Its activity is regulated as follows. The activity of SLC25A39 is regulated by levels of mitochondrial glutathione via its ability to bind [2Fe-2S] iron-sulfur cluster. Upon physiological levels of mitochondrial glutathione, glutathione prevents iron-sulfur-binding to SLC25A39 promoting cleavage and degradation by AFG3L2. Upon depletion of mitochondrial glutathione, SLC25A39 binds iron-sulfur, preventing cleavage and degradation by AFG3L2. Mitochondrial transporter required for glutathione import into mitochondria. Glutathione, which plays key roles in oxidative metabolism, is produced exclusively in the cytosol and is imported in many organelles. Mitochondrial glutathione is required for the activity and stability of proteins containing iron-sulfur clusters, as well as erythropoiesis. This Rattus norvegicus (Rat) protein is Mitochondrial glutathione transporter SLC25A39 (Slc25a39).